The primary structure comprises 359 residues: N-acetylhexosamine 1-kinase (359 aa).

Positions 21–359 (VTGIEPYGDG…IVADIMEAAR (339 aa)) constitute a Protein kinase domain.

This sequence belongs to the protein kinase superfamily. Requires Mg(2+) as cofactor.

It carries out the reaction N-acetyl-D-hexosamine + ATP = N-acetyl-alpha-D-hexosamine 1-phosphate + ADP + H(+). In terms of biological role, phosphorylates both N-acetylglucosamine (GlcNAc) and N-acetylgalactosamine (GalNAc) at similar rates. Involved in the lacto-N-biose I/galacto-N-biose (LNB/GNB) degradation pathway, which is important for host intestinal colonization by bifidobacteria. Also accepts GTP and ITP as phosphate donors. In vitro, can phosphorylate several GlcNAc and GalNAc derivatives. This is N-acetylhexosamine 1-kinase (nahK) from Bifidobacterium longum subsp. longum (strain ATCC 15707 / DSM 20219 / JCM 1217 / NCTC 11818 / E194b).